Here is a 461-residue protein sequence, read N- to C-terminus: Proline--tRNA ligase (461 aa).

This sequence belongs to the class-II aminoacyl-tRNA synthetase family. ProS type 3 subfamily. As to quaternary structure, homodimer.

It localises to the cytoplasm. The enzyme catalyses tRNA(Pro) + L-proline + ATP = L-prolyl-tRNA(Pro) + AMP + diphosphate. Functionally, catalyzes the attachment of proline to tRNA(Pro) in a two-step reaction: proline is first activated by ATP to form Pro-AMP and then transferred to the acceptor end of tRNA(Pro). The sequence is that of Proline--tRNA ligase from Methanococcus vannielii (strain ATCC 35089 / DSM 1224 / JCM 13029 / OCM 148 / SB).